The primary structure comprises 208 residues: LexA repressor (208 aa).

A DNA-binding region (H-T-H motif) is located at residues 30–50 (VREICAAVGLSSTSTVHGHLS). Active-site for autocatalytic cleavage activity residues include Ser129 and Lys167.

Belongs to the peptidase S24 family. In terms of assembly, homodimer.

It carries out the reaction Hydrolysis of Ala-|-Gly bond in repressor LexA.. In terms of biological role, represses a number of genes involved in the response to DNA damage (SOS response), including recA and lexA. In the presence of single-stranded DNA, RecA interacts with LexA causing an autocatalytic cleavage which disrupts the DNA-binding part of LexA, leading to derepression of the SOS regulon and eventually DNA repair. The chain is LexA repressor from Lactobacillus acidophilus (strain ATCC 700396 / NCK56 / N2 / NCFM).